The following is a 142-amino-acid chain: MRRVIAQGTFDILHPGHVHYLSDAASLGDELHVIIARGENVTHKPKPILDGRQRRDMVAALDVVDEAHLGHVEDIFVPIEEIDPDVIVLGYDQHHDEDGIKAALDARGIDCEVTRATPRELRHDDELLSTGRIIDRIVERRC.

ATP contacts are provided by residues 9 to 10, 14 to 17, and D92; these read TF and HPGH.

It belongs to the archaeal FAD synthase family. As to quaternary structure, homodimer. It depends on a divalent metal cation as a cofactor.

The enzyme catalyses FMN + ATP + H(+) = FAD + diphosphate. Its pathway is cofactor biosynthesis; FAD biosynthesis; FAD from FMN: step 1/1. Its function is as follows. Catalyzes the transfer of the AMP portion of ATP to flavin mononucleotide (FMN) to produce flavin adenine dinucleotide (FAD) coenzyme. This is FAD synthase from Haloferax volcanii (strain ATCC 29605 / DSM 3757 / JCM 8879 / NBRC 14742 / NCIMB 2012 / VKM B-1768 / DS2) (Halobacterium volcanii).